The following is a 247-amino-acid chain: Germin-like protein 9-1 (247 aa).

The N-terminal stretch at Met1 to Ala25 is a signal peptide. The Cupin type-1 domain occupies Lys53–Asp201. Residues His100, His102, and Glu107 each coordinate Mn(2+). Asn126 carries N-linked (GlcNAc...) asparagine glycosylation. His148 provides a ligand contact to Mn(2+). Asn153 carries N-linked (GlcNAc...) asparagine glycosylation.

The protein belongs to the germin family. In terms of assembly, oligomer (believed to be a pentamer but probably hexamer).

It localises to the secreted. Its subcellular location is the extracellular space. The protein resides in the apoplast. In terms of biological role, may play a role in plant defense. Probably has no oxalate oxidase activity even if the active site is conserved. This is Germin-like protein 9-1 from Oryza sativa subsp. japonica (Rice).